The sequence spans 371 residues: Alginate lyase (371 aa).

An N-terminal signal peptide occupies residues 1–26; that stretch reads MQSTDLKRLLIPSLLGLAIVTGSAQA. Substrate is bound by residues 67 to 68, 140 to 141, and Tyr-258; these read SK and HT.

The protein belongs to the polysaccharide lyase 5 family.

It is found in the periplasm. The enzyme catalyses Eliminative cleavage of alginate to give oligosaccharides with 4-deoxy-alpha-L-erythro-hex-4-enuronosyl groups at their non-reducing ends and beta-D-mannuronate at their reducing end.. Catalyzes the depolymerization of alginate by cleaving the beta-1,4 glycosidic bond between two adjacent sugar residues via a beta-elimination mechanism. May serve to degrade mislocalized alginate that is trapped in the periplasmic space. This Pseudomonas fluorescens (strain ATCC BAA-477 / NRRL B-23932 / Pf-5) protein is Alginate lyase.